A 206-amino-acid chain; its full sequence is 3-isopropylmalate dehydratase small subunit (206 aa).

The protein belongs to the LeuD family. LeuD type 1 subfamily. Heterodimer of LeuC and LeuD.

The enzyme catalyses (2R,3S)-3-isopropylmalate = (2S)-2-isopropylmalate. It participates in amino-acid biosynthesis; L-leucine biosynthesis; L-leucine from 3-methyl-2-oxobutanoate: step 2/4. In terms of biological role, catalyzes the isomerization between 2-isopropylmalate and 3-isopropylmalate, via the formation of 2-isopropylmaleate. In Leptospira borgpetersenii serovar Hardjo-bovis (strain JB197), this protein is 3-isopropylmalate dehydratase small subunit.